Reading from the N-terminus, the 118-residue chain is Small ribosomal subunit protein bS6 (118 aa).

It belongs to the bacterial ribosomal protein bS6 family.

Functionally, binds together with bS18 to 16S ribosomal RNA. This Orientia tsutsugamushi (strain Ikeda) (Rickettsia tsutsugamushi) protein is Small ribosomal subunit protein bS6.